Here is a 248-residue protein sequence, read N- to C-terminus: Oligo(A)/oligo(T)-binding protein (248 aa).

Residues methionine 1–arginine 36 mediate DNA binding. Disordered stretches follow at residues methionine 1–glutamine 127 and threonine 219–isoleucine 248. A run of 3 repeats spans residues glycine 8–glycine 12, glycine 14–glycine 18, and glycine 26–glycine 30. Residues glycine 8–glycine 30 form a 3 X 5 AA repeats of G-R-K-P-G region. Residues glycine 12–lysine 21 are compositionally biased toward basic residues. The segment covering glutamine 37–threonine 71 has biased composition (basic and acidic residues). Composition is skewed to low complexity over residues histidine 72 to serine 100 and glutamine 111 to glutamine 127.

As to quaternary structure, binds as a dimer or higher oligomer.

Its function is as follows. DNA-binding protein that recognizes oligo(A).oligo(T) tracts (A.T DNA). Can bind to any 11 bp sequence in which 10 bases conform to an uninterrupted oligo(A).oligo(T) tract. The polypeptide is Oligo(A)/oligo(T)-binding protein (DAT1) (Saccharomyces cerevisiae (strain ATCC 204508 / S288c) (Baker's yeast)).